Reading from the N-terminus, the 227-residue chain is Probable methylthioribulose-1-phosphate dehydratase (227 aa).

C87 lines the substrate pocket. Zn(2+) contacts are provided by H105 and H107. E129 functions as the Proton donor/acceptor in the catalytic mechanism. Position 185 (H185) interacts with Zn(2+).

The protein belongs to the aldolase class II family. MtnB subfamily. Zn(2+) is required as a cofactor.

It localises to the cytoplasm. It catalyses the reaction 5-(methylsulfanyl)-D-ribulose 1-phosphate = 5-methylsulfanyl-2,3-dioxopentyl phosphate + H2O. It participates in amino-acid biosynthesis; L-methionine biosynthesis via salvage pathway; L-methionine from S-methyl-5-thio-alpha-D-ribose 1-phosphate: step 2/6. Catalyzes the dehydration of methylthioribulose-1-phosphate (MTRu-1-P) into 2,3-diketo-5-methylthiopentyl-1-phosphate (DK-MTP-1-P). The polypeptide is Probable methylthioribulose-1-phosphate dehydratase (Drosophila ananassae (Fruit fly)).